The primary structure comprises 428 residues: Bifunctional IPC transferase and DIPP synthase (428 aa).

A mobA-like NTP transferase region spans residues 2 to 227; that stretch reads VETAVILAGG…KAKKYLVKTA (226 aa). Residues 8–10, Lys25, Glu80, and Glu116 contribute to the CTP site; that span reads LAG. Position 116 (Glu116) interacts with Mg(2+). The interval 228–425 is CDP-alcohol phosphatidyltransferases; sequence IKGVGDGFIS…LTIYLVWKKK (198 aa). Transmembrane regions (helical) follow at residues 266 to 286, 336 to 356, and 389 to 409; these read FLLG…GGIL, PSWD…MVSY, and MIMI…LAII.

The protein in the N-terminal section; belongs to the MobA family. This sequence in the C-terminal section; belongs to the CDP-alcohol phosphatidyltransferase class-I family. Requires Mg(2+) as cofactor.

It is found in the membrane. It carries out the reaction 1D-myo-inositol 3-phosphate + CTP + H(+) = CDP-1L-myo-inositol + diphosphate. The catalysed reaction is CDP-1L-myo-inositol + 1D-myo-inositol 3-phosphate = bis(1L-myo-inositol) 3,1'-phosphate 1-phosphate + CMP + H(+). Functionally, involved in biosynthesis of di-myo-inositol phosphate (DIP), a widespread organic solute in microorganisms adapted to hot environments. Catalyzes the condensation of CTP and L-myo-inositol-1-phosphate into CDP-L-myo-inositol, as well as the biosynthesis of di-myo-inositol-1,3'-phosphate-1'-phosphate (DIPP) from CDP-L-myo-inositol and L-myo-inositol-1-phosphate. In Aquifex aeolicus (strain VF5), this protein is Bifunctional IPC transferase and DIPP synthase (spsI).